Here is a 1331-residue protein sequence, read N- to C-terminus: NPC1-like intracellular cholesterol transporter 1 (1331 aa).

The signal sequence occupies residues 1–20 (MAAAWLGWLLWALLLSAAQG). Residues 21-282 (ELYTPKHEAG…RPSFYMGRMP (262 aa)) are Extracellular-facing. 9 disulfides stabilise this stretch: cysteine 32-cysteine 90, cysteine 38-cysteine 56, cysteine 77-cysteine 125, cysteine 91-cysteine 129, cysteine 113-cysteine 254, cysteine 116-cysteine 172, cysteine 189-cysteine 197, cysteine 243-cysteine 259, and cysteine 256-cysteine 263. Residues asparagine 53 and asparagine 85 are each glycosylated (N-linked (GlcNAc...) asparagine). An N-linked (GlcNAc...) asparagine glycan is attached at asparagine 138. A glycan (N-linked (GlcNAc...) asparagine) is linked at asparagine 244. The helical transmembrane segment at 283-303 (GWLALIIIFTAVFVLLSAVLV) threads the bilayer. At 304–352 (RLRVVSNRNKNKAEGPQEAPKLPHKHKLSPHTILGRFFQNWGTRVASWP) the chain is on the cytoplasmic side. Residues 353-373 (LTVLALSFIVVIALAAGLTFI) form a helical membrane-spanning segment. Residues 374 to 632 (ELTTDPVELW…DEINRTTIQD (259 aa)) are Extracellular-facing. N-linked (GlcNAc...) asparagine glycans are attached at residues asparagine 416, asparagine 431, asparagine 464, asparagine 479, asparagine 497, and asparagine 506. Cysteines 471 and 485 form a disulfide. Cysteine 525 and cysteine 542 are disulfide-bonded. Residues asparagine 606 and asparagine 626 are each glycosylated (N-linked (GlcNAc...) asparagine). One can recognise an SSD domain in the interval 632–797 (DLPVFAVSYI…MTAFVALLSL (166 aa)). A helical membrane pass occupies residues 633 to 653 (LPVFAVSYIIVFLYISLALGS). The Cytoplasmic segment spans residues 654–665 (YSRCSRVAVESK). Residues 666 to 686 (ATLGLGGVIVVLGAVLAAMGF) traverse the membrane as a helical segment. Over 687–696 (YSYLGVPSSL) the chain is Extracellular. The chain crosses the membrane as a helical span at residues 697 to 717 (VIIQVVPFLVLAVGADNIFIF). At 718 to 742 (VLEYQRLPRMPGEQREAHIGRTLGS) the chain is on the cytoplasmic side. Residues 743–763 (VAPSMLLCSLSEAICFFLGAL) form a helical membrane-spanning segment. Over 764–776 (TPMPAVRTFALTS) the chain is Extracellular. Residues 777–797 (GLAIILDFLLQMTAFVALLSL) form a helical membrane-spanning segment. The Cytoplasmic segment spans residues 798–846 (DSKRQEASRPDVLCCFSTRKLPPPKEKEGLLLRFFRKIYAPFLLHRFIR). Residues 847 to 867 (PVVMLLFLTLFGANLYLMCNI) traverse the membrane as a helical segment. Residues 868 to 1113 (NVGLDQELAL…QQYLTVLPEG (246 aa)) are Extracellular-facing. 2 N-linked (GlcNAc...) asparagine glycosylation sites follow: asparagine 909 and asparagine 917. Intrachain disulfides connect cysteine 920–cysteine 925, cysteine 967–cysteine 1025, and cysteine 981–cysteine 990. 3 N-linked (GlcNAc...) asparagine glycosylation sites follow: asparagine 996, asparagine 1038, and asparagine 1076. The chain crosses the membrane as a helical span at residues 1114 to 1134 (IFTLALCFVPTFVVCYLLLGL). Residues 1135–1142 (DMCSGILN) lie on the Cytoplasmic side of the membrane. A helical transmembrane segment spans residues 1143-1163 (LLSIIMILVDTIGLMAVWGIS). Topologically, residues 1164 to 1165 (YN) are extracellular. The helical transmembrane segment at 1166 to 1186 (AVSLINLVTAVGMSVEFVSHI) threads the bilayer. Residues 1187-1206 (TRSFAVSTKPTRLERAKDAT) lie on the Cytoplasmic side of the membrane. The helical transmembrane segment at 1207–1227 (VFMGSAVFAGVAMTNFPGILI) threads the bilayer. At 1228–1242 (LGFAQAQLIQIFFFR) the chain is on the extracellular side. A helical membrane pass occupies residues 1243–1263 (LNLLITLLGLLHGLVFLPVVL). Residues 1264–1331 (SYLGPDVNQA…SSLPKSDQKF (68 aa)) are Cytoplasmic-facing.

The protein belongs to the patched family. In terms of assembly, interacts with RAB11A, MYO5B and RAB11FIP2. Interaction with RAB11A, MYO5B and RAB11FIP2 is required for proper transport to the plasma membrane upon cholesterol depletion. Interacts with NPC2. Interacts with LIMA1. Highly glycosylated. Small intestine showed the highest level of expression. Expression in other tissues including gall bladder, liver, testis and stomach is also observed. Along the duodenum-ileum axis, the levels vary in different segments of the intestine with peak expression in the proximal jejunum. Protein expression is confined to the enterocyte. Discrete localization to the epithelial layer bordering the luminal space along the crypt-villus axis. Protein expression in the enterocyte is observed closest to the luminal space. Expression in enterocytes from the proximal (jejunum) but not in the distal (ileum) region.

It localises to the apical cell membrane. It is found in the cell membrane. The catalysed reaction is cholesterol(in) = cholesterol(out). The enzyme catalyses sitosterol(out) = sitosterol(in). In terms of biological role, plays a major role in cholesterol homeostasis. Critical for the uptake of cholesterol across the plasma membrane of the intestinal enterocyte. Involved in plant sterol absorption, it transports sitosterol, although at lower rates than cholesterol. Is the direct molecular target of ezetimibe, a drug that inhibits cholesterol absorption and is approved for the treatment of hypercholesterolemia. May have a function in the transport of multiple lipids and their homeostasis, thereby influencing lipid metabolism regulation. May be involved in caveolin trafficking from the plasma membrane. Acts as a negative regulator of NPC2 and down-regulates its expression and secretion by inhibiting its maturation and accelerating its degradation. In Rattus norvegicus (Rat), this protein is NPC1-like intracellular cholesterol transporter 1.